The chain runs to 177 residues: B-phycoerythrin beta chain (177 aa).

Residues Cys-50 and Cys-61 each coordinate phycourobilin. Asn-72 carries the post-translational modification N4-methylasparagine. Residues Cys-82 and Cys-158 each contribute to the (2R,3E)-phycoerythrobilin site.

Belongs to the phycobiliprotein family. As to quaternary structure, heteromer of 6 alpha, 6 beta and one gamma chain. Post-translationally, contains two covalently linked phycoerythrobilin chromophores and one covalently linked phycourobilin chromophore.

Its subcellular location is the plastid. It is found in the chloroplast thylakoid membrane. In terms of biological role, light-harvesting photosynthetic bile pigment-protein from the phycobiliprotein complex. The polypeptide is B-phycoerythrin beta chain (cpeB) (Rhodella violacea (Red alga)).